We begin with the raw amino-acid sequence, 439 residues long: GTPase Der (439 aa).

EngA-type G domains follow at residues 4–168 and 177–352; these read PIVA…KDDE and INIA…DNYT. Residues 10–17, 57–61, 120–123, 183–190, 230–234, and 295–298 contribute to the GTP site; these read GRPNVGKS, DTGGI, NKID, GKPNVGKS, DTAGL, and NKWD. The KH-like domain occupies 353–437; that stretch reads KRVKTGVLND…GIKTEFRERK (85 aa).

Belongs to the TRAFAC class TrmE-Era-EngA-EngB-Septin-like GTPase superfamily. EngA (Der) GTPase family. In terms of assembly, associates with the 50S ribosomal subunit.

Its function is as follows. GTPase that plays an essential role in the late steps of ribosome biogenesis. The sequence is that of GTPase Der from Clostridium botulinum (strain Loch Maree / Type A3).